Reading from the N-terminus, the 363-residue chain is Replication factor C subunit 4 (363 aa).

The residue at position 1 (Met1) is an N-acetylmethionine. A disordered region spans residues Met1–Lys36. An N6-acetyllysine mark is found at Lys6 and Lys13. Gly78–Thr85 provides a ligand contact to ATP.

The protein belongs to the activator 1 small subunits family. As to quaternary structure, subunit of the RFC complex, an heteropentameric complex consisting of a large subunit RFC1 and four small subunits RFC2, RFC3, RFC4 and RFC5; the RFC complex interacts with PCNA. Forms an heterotetrameric complex with RFC2, RFC3 and RFC5; this complex has ATPase activity but is not stimulated by PCNA. The heterotetramer of subunits RFC2, RFC3, RFC4 and RFC5 interacts with RAD17. Interacts with ATAD5. Interacts with CTF18. Interacts with CNTD1; this interaction facilitates crossover formation.

It is found in the nucleus. Its function is as follows. Subunit of the replication factor C (RFC) complex which acts during elongation of primed DNA templates by DNA polymerases delta and epsilon, and is necessary for ATP-dependent loading of proliferating cell nuclear antigen (PCNA) onto primed DNA. The RFC4 subunit probably functions as a scaffold on which the other complex components can assemble. In Homo sapiens (Human), this protein is Replication factor C subunit 4 (RFC4).